Here is a 212-residue protein sequence, read N- to C-terminus: Imidazole glycerol phosphate synthase subunit HisH (212 aa).

Residues 2 to 212 form the Glutamine amidotransferase type-1 domain; it reads LTAIIDYESG…MIGNFLTWTP (211 aa). C87 (nucleophile) is an active-site residue. Residues H192 and E194 contribute to the active site.

Heterodimer of HisH and HisF.

The protein localises to the cytoplasm. It carries out the reaction 5-[(5-phospho-1-deoxy-D-ribulos-1-ylimino)methylamino]-1-(5-phospho-beta-D-ribosyl)imidazole-4-carboxamide + L-glutamine = D-erythro-1-(imidazol-4-yl)glycerol 3-phosphate + 5-amino-1-(5-phospho-beta-D-ribosyl)imidazole-4-carboxamide + L-glutamate + H(+). The catalysed reaction is L-glutamine + H2O = L-glutamate + NH4(+). The protein operates within amino-acid biosynthesis; L-histidine biosynthesis; L-histidine from 5-phospho-alpha-D-ribose 1-diphosphate: step 5/9. Functionally, IGPS catalyzes the conversion of PRFAR and glutamine to IGP, AICAR and glutamate. The HisH subunit catalyzes the hydrolysis of glutamine to glutamate and ammonia as part of the synthesis of IGP and AICAR. The resulting ammonia molecule is channeled to the active site of HisF. In Ruegeria pomeroyi (strain ATCC 700808 / DSM 15171 / DSS-3) (Silicibacter pomeroyi), this protein is Imidazole glycerol phosphate synthase subunit HisH.